Here is a 360-residue protein sequence, read N- to C-terminus: Ribosomal RNA large subunit methyltransferase M (360 aa).

S-adenosyl-L-methionine is bound by residues Ser192, 225 to 228 (APGG), Asp244, Asp264, and Asp280. The Proton acceptor role is filled by Lys309.

Belongs to the class I-like SAM-binding methyltransferase superfamily. RNA methyltransferase RlmE family. RlmM subfamily. Monomer.

It localises to the cytoplasm. The catalysed reaction is cytidine(2498) in 23S rRNA + S-adenosyl-L-methionine = 2'-O-methylcytidine(2498) in 23S rRNA + S-adenosyl-L-homocysteine + H(+). Its function is as follows. Catalyzes the 2'-O-methylation at nucleotide C2498 in 23S rRNA. This Alkalilimnicola ehrlichii (strain ATCC BAA-1101 / DSM 17681 / MLHE-1) protein is Ribosomal RNA large subunit methyltransferase M.